The chain runs to 172 residues: MASGPHSTATAAAAASSAAPSAGGSSSGTTTTTTTTTGGILIGDRLYSEVSLTIDHSLIPEERLSPTPSMQDGLDLPSETDLRILGCELIQAAGILLRLPQVAMATGQVLFHRFFYSKSFVKHSFEIVAMACINLASKIEEAPRRIRDVINVFHHLRQLRGKSDQLHLPKPG.

Residues 1-36 (MASGPHSTATAAAAASSAAPSAGGSSSGTTTTTTTT) form a disordered region. The interval 88–168 (ELIQAAGILL…LRGKSDQLHL (81 aa)) is cyclin-like.

It belongs to the cyclin family. Cyclin L subfamily. In terms of assembly, interacts with POLR2A via its hyperphosphorylated C-terminal domain (CTD). Interacts with CDK11A, CDK11B, CDK12 and CDK13. May form a ternary complex with CDK11B and casein kinase II (CKII). Interacts with pre-mRNA-splicing factors, including at least SRSF1, SRSF2 and SRSF7/SLU7.

Its subcellular location is the nucleus speckle. It localises to the nucleus. It is found in the nucleoplasm. Its function is as follows. Involved in pre-mRNA splicing. Functions in association with cyclin-dependent kinases (CDKs). May play a role in the regulation of RNA polymerase II (pol II). Inhibited by the CDK-specific inhibitor CDKN1A/p21. The protein is Cyclin-L1 (CCNL1) of Pongo abelii (Sumatran orangutan).